Here is a 365-residue protein sequence, read N- to C-terminus: DNA repair protein rhp51 (365 aa).

Positions 1–25 are disordered; sequence MADTEVEMQVSAADTNNNENGQAQS. The span at 12–25 shows a compositional bias: polar residues; sequence AADTNNNENGQAQS. 149-156 contacts ATP; the sequence is GEFRTGKS.

The protein belongs to the RecA family. RAD51 subfamily. In terms of assembly, interacts with rad22, rad54, rdh54, rhp54, rti1, swi2 and swi5. Forms homooiligomers.

It localises to the nucleus. Required both for recombination and for the repair of DNA damage caused by X-rays. Binds to single and double-stranded DNA, in the presence of magnesium, and exhibits DNA-dependent ATPase activity. Promotes DNA strand annealing and strand exchange via DNA recombinase activity and forms helical nucleoprotein filaments. The chain is DNA repair protein rhp51 (rhp51) from Schizosaccharomyces pombe (strain 972 / ATCC 24843) (Fission yeast).